Here is a 341-residue protein sequence, read N- to C-terminus: Methionine import ATP-binding protein MetN 2 (341 aa).

In terms of domain architecture, ABC transporter spans 2–241 (ILLENVKKIY…PQQDITKRFV (240 aa)). Residue 38–45 (GYSGAGKS) coordinates ATP.

It belongs to the ABC transporter superfamily. Methionine importer (TC 3.A.1.24) family. As to quaternary structure, the complex is composed of two ATP-binding proteins (MetN), two transmembrane proteins (MetI) and a solute-binding protein (MetQ).

It is found in the cell membrane. The catalysed reaction is L-methionine(out) + ATP + H2O = L-methionine(in) + ADP + phosphate + H(+). It catalyses the reaction D-methionine(out) + ATP + H2O = D-methionine(in) + ADP + phosphate + H(+). Its function is as follows. Part of the ABC transporter complex MetNIQ involved in methionine import. Responsible for energy coupling to the transport system. The protein is Methionine import ATP-binding protein MetN 2 of Bacillus thuringiensis subsp. konkukian (strain 97-27).